Reading from the N-terminus, the 307-residue chain is Oxygen-dependent coproporphyrinogen-III oxidase (307 aa).

Residue S99 participates in substrate binding. A divalent metal cation-binding residues include H103 and H113. H113 acts as the Proton donor in catalysis. N115–R117 contacts substrate. Residues H152 and H182 each contribute to the a divalent metal cation site. The interval Y247–R282 is important for dimerization. Residue G265–R267 coordinates substrate.

Belongs to the aerobic coproporphyrinogen-III oxidase family. As to quaternary structure, homodimer. The cofactor is a divalent metal cation.

It localises to the cytoplasm. It catalyses the reaction coproporphyrinogen III + O2 + 2 H(+) = protoporphyrinogen IX + 2 CO2 + 2 H2O. Its pathway is porphyrin-containing compound metabolism; protoporphyrin-IX biosynthesis; protoporphyrinogen-IX from coproporphyrinogen-III (O2 route): step 1/1. Involved in the heme biosynthesis. Catalyzes the aerobic oxidative decarboxylation of propionate groups of rings A and B of coproporphyrinogen-III to yield the vinyl groups in protoporphyrinogen-IX. The polypeptide is Oxygen-dependent coproporphyrinogen-III oxidase (Burkholderia multivorans (strain ATCC 17616 / 249)).